The following is a 285-amino-acid chain: ATP phosphoribosyltransferase (285 aa).

This sequence belongs to the ATP phosphoribosyltransferase family. Long subfamily. The cofactor is Mg(2+).

It is found in the cytoplasm. The catalysed reaction is 1-(5-phospho-beta-D-ribosyl)-ATP + diphosphate = 5-phospho-alpha-D-ribose 1-diphosphate + ATP. It participates in amino-acid biosynthesis; L-histidine biosynthesis; L-histidine from 5-phospho-alpha-D-ribose 1-diphosphate: step 1/9. Feedback inhibited by histidine. Functionally, catalyzes the condensation of ATP and 5-phosphoribose 1-diphosphate to form N'-(5'-phosphoribosyl)-ATP (PR-ATP). Has a crucial role in the pathway because the rate of histidine biosynthesis seems to be controlled primarily by regulation of HisG enzymatic activity. The protein is ATP phosphoribosyltransferase of Sulfurisphaera tokodaii (strain DSM 16993 / JCM 10545 / NBRC 100140 / 7) (Sulfolobus tokodaii).